Reading from the N-terminus, the 284-residue chain is 4-diphosphocytidyl-2-C-methyl-D-erythritol kinase (284 aa).

Lys14 is a catalytic residue. ATP is bound at residue 98–108 (PMGGGLGGGSS). Residue Asp140 is part of the active site.

The protein belongs to the GHMP kinase family. IspE subfamily.

It carries out the reaction 4-CDP-2-C-methyl-D-erythritol + ATP = 4-CDP-2-C-methyl-D-erythritol 2-phosphate + ADP + H(+). It participates in isoprenoid biosynthesis; isopentenyl diphosphate biosynthesis via DXP pathway; isopentenyl diphosphate from 1-deoxy-D-xylulose 5-phosphate: step 3/6. Its function is as follows. Catalyzes the phosphorylation of the position 2 hydroxy group of 4-diphosphocytidyl-2C-methyl-D-erythritol. The chain is 4-diphosphocytidyl-2-C-methyl-D-erythritol kinase from Shewanella sp. (strain MR-7).